Reading from the N-terminus, the 955-residue chain is MTRKNTTTNPWAKFHGPNLGYVIEQYDLYVTGAGSVDPELQELFEIFGAPSFQDDVVTGDNTATHFSPQNTGNIEKILKVVQLVEQIRSFGHTLAHINPMEDAANGQSLLEKAMNELSDADLKAIPAKTVWPDAPEGIHTALDVIHRLKEVYTQSLAYEFSHIQDSEERAWLHQMVESNSLRQPLSNKKRTALLKRLTAVEGFEQFLHKTFVGQKRFSIEGVDMLVPVLDEIVLEGAKNGVEDVMIGMAHRGRLSVLAHVLEKPYSHMFAEFKHAKIEGAVANSGWTGDVKYHLGREQVVSNEEVSTRVTLANNPSHLEFVNPVVEGFARAAQENRKKSGLPEQDTSKSFVILVHGDAAFPGQGIVSETLNLSRLNAYQTGGTIHVIANNAVGFTTDSYDSRSTKYSSDLAKGFDIPIVHVNADDPEACLAAANLAIQYRMLFKKDFLIDLIGYRRYGHNEMDDPAVTQPQVYKKIKNHPTVRAIYADQLQAAGVLNADEIETITQFTQEQLKSDYAQVPPADTSDATIHVKVPDVVAKGIQPIDTGVELDSLRAINEGLLSWPEGFNVYPKVKKILERRKDALEENGKIEWALAESLAFASILQEGTPIRLTGQDSQRGTFAHRHIVLHDTDTNETYSPLHRLPNINASFSVHNSPLSEAAVVGYEYGYNVFAPETLVMWEAQYGDFSNTAQALFDQYVSAGRAKWGQKSGLVLLLPHGYEGQGPEHSSARPERFLQLAAENNWTVANLTSAAQYFHILRRQASILGTEAVRPLVLMTPKSLLRHPLTLSTASQLSEGRFQPALEQENLGTKPNKVKRLVLSTGKMAIDLAAEIESDKHEYNLDEIHIVRIEQLYPFPAEKVQSIIKRFKNLEEIIWVQEEPRNMGAWHYMAPILFELAGDKVKTGYIGRPDRSSPSGGDPFAHKAEQELIVSHALDVKYNFRQDKLEIEVFSN.

This sequence belongs to the alpha-ketoglutarate dehydrogenase family. Homodimer. Part of the 2-oxoglutarate dehydrogenase (OGDH) complex composed of E1 (2-oxoglutarate dehydrogenase), E2 (dihydrolipoamide succinyltransferase) and E3 (dihydrolipoamide dehydrogenase); the complex contains multiple copies of the three enzymatic components (E1, E2 and E3). It depends on thiamine diphosphate as a cofactor.

It carries out the reaction N(6)-[(R)-lipoyl]-L-lysyl-[protein] + 2-oxoglutarate + H(+) = N(6)-[(R)-S(8)-succinyldihydrolipoyl]-L-lysyl-[protein] + CO2. Its function is as follows. E1 component of the 2-oxoglutarate dehydrogenase (OGDH) complex which catalyzes the decarboxylation of 2-oxoglutarate, the first step in the conversion of 2-oxoglutarate to succinyl-CoA and CO(2). The protein is 2-oxoglutarate dehydrogenase E1 component of Bacillus cereus (strain AH820).